Here is an 88-residue protein sequence, read N- to C-terminus: Fe-S protein maturation auxiliary factor SufT (88 aa).

The protein belongs to the MIP18 family.

Functionally, involved in the maturation of iron-sulfur (Fe-S) proteins. May function as a Fe-S cluster carrier. Is required for S.aureus growth under conditions that impose a high demand for lipoic acid, likely via a role in the maturation of the lipoate synthase LipA. Is non-essential for growth in conditions that impose a low demand for lipoic acid or Fe-S clusters, such as fermentative growth. Also seems to be involved in the maturation of AcnA, LeuCD and IlvD proteins, that utilize Fe-S cluster cofactors, and its role increases under conditions of high-demand for Fe-S clusters (respiratory growth). Is not involved in the repair of Fe-S clusters damaged by reactive oxygen species or in the physical protection of Fe-S clusters from oxidants. Displays synergy with the Fe-S cluster carrier Nfu. This chain is Fe-S protein maturation auxiliary factor SufT, found in Staphylococcus aureus (strain USA300).